Reading from the N-terminus, the 104-residue chain is Thioredoxin (104 aa).

The Thioredoxin domain occupies 2-104; that stretch reads AIVKVTDSDF…NLAEVLDKHL (103 aa). A disulfide bridge connects residues cysteine 29 and cysteine 32.

It belongs to the thioredoxin family.

In terms of biological role, component of the thioredoxin-thioredoxin reductase system. Participates in various redox reactions through the reversible oxidation of its active center dithiol to a disulfide and catalyzes dithiol-disulfide exchange reactions. The protein is Thioredoxin (trxA) of Staphylococcus epidermidis (strain ATCC 35984 / DSM 28319 / BCRC 17069 / CCUG 31568 / BM 3577 / RP62A).